A 91-amino-acid polypeptide reads, in one-letter code: Proline, histidine and glycine-rich protein 1 (91 aa).

The disordered stretch occupies residues 1-91 (MHPGGKGHCG…HCGPHPGPHH (91 aa)). Gly residues-rich tracts occupy residues 33 to 42 (HPGHGPGHCP), 49 to 63 (GHGG…GHCP), and 70 to 82 (GHGG…GPGH).

This chain is Proline, histidine and glycine-rich protein 1 (Phgr1), found in Mus musculus (Mouse).